A 1332-amino-acid polypeptide reads, in one-letter code: Aldehyde oxidase 1 (1332 aa).

The 2Fe-2S ferredoxin-type domain maps to 4-91 (STLYFYVNGR…GAAVTTVEGV (88 aa)). [2Fe-2S] cluster is bound by residues cysteine 43, cysteine 48, cysteine 51, and cysteine 73. Glutamine 112 lines the Mo-molybdopterin pocket. Residues cysteine 113, cysteine 116, cysteine 148, and cysteine 150 each coordinate [2Fe-2S] cluster. Cysteine 150 contacts Mo-molybdopterin. In terms of domain architecture, FAD-binding PCMH-type spans 234-419 (FTGDRVTWIS…LSVTIPYSRK (186 aa)). Residues 262 to 269 (VVMGNTSV), alanine 343, serine 352, histidine 356, aspartate 365, and leucine 409 contribute to the FAD site. Residues 800 to 801 (AF), methionine 1041, 1082 to 1085 (GSVV), glutamine 1197, and leucine 1262 contribute to the Mo-molybdopterin site. Glutamate 1264 (proton acceptor; for azaheterocycle hydroxylase activity) is an active-site residue.

The protein belongs to the xanthine dehydrogenase family. Homodimer. The cofactor is [2Fe-2S] cluster. FAD is required as a cofactor. It depends on Mo-molybdopterin as a cofactor. As to expression, expressed in liver.

It is found in the cytoplasm. The enzyme catalyses an aldehyde + O2 + H2O = a carboxylate + H2O2 + H(+). The catalysed reaction is retinal + O2 + H2O = retinoate + H2O2 + H(+). With respect to regulation, inhibited by menadione and isovanillin. Not inhibited by allopurinol, a xanthine dehydrogenase potent inhibitor. Oxidase with broad substrate specificity, oxidizing aromatic azaheterocycles, such as N1-methylnicotinamide, N-methylphthalazinium and phthalazine, as well as aldehydes, such as benzaldehyde, retinal, pyridoxal, and vanillin. Plays a key role in the metabolism of xenobiotics and drugs containing aromatic azaheterocyclic substituents. Participates in the bioactivation of prodrugs such as famciclovir, catalyzing the oxidation step from 6-deoxypenciclovir to penciclovir, which is a potent antiviral agent. Is probably involved in the regulation of reactive oxygen species homeostasis. May be a prominent source of superoxide generation via the one-electron reduction of molecular oxygen. May also catalyze nitric oxide (NO) production via the reduction of nitrite to NO with NADH or aldehyde as electron donor. May play a role in adipogenesis. This Cavia porcellus (Guinea pig) protein is Aldehyde oxidase 1.